A 176-amino-acid chain; its full sequence is Peptide deformylase (176 aa).

Residues C95 and H137 each coordinate Fe cation. E138 is an active-site residue. Position 141 (H141) interacts with Fe cation.

This sequence belongs to the polypeptide deformylase family. Fe(2+) serves as cofactor.

It carries out the reaction N-terminal N-formyl-L-methionyl-[peptide] + H2O = N-terminal L-methionyl-[peptide] + formate. Removes the formyl group from the N-terminal Met of newly synthesized proteins. Requires at least a dipeptide for an efficient rate of reaction. N-terminal L-methionine is a prerequisite for activity but the enzyme has broad specificity at other positions. The polypeptide is Peptide deformylase (Hyphomonas neptunium (strain ATCC 15444)).